We begin with the raw amino-acid sequence, 220 residues long: Elongation factor Ts, chloroplastic (220 aa).

The protein belongs to the EF-Ts family.

The protein localises to the plastid. Its subcellular location is the chloroplast. Its function is as follows. Associates with the EF-Tu.GDP complex and induces the exchange of GDP to GTP. It remains bound to the aminoacyl-tRNA.EF-Tu.GTP complex up to the GTP hydrolysis stage on the ribosome. The chain is Elongation factor Ts, chloroplastic (tsf) from Pyropia yezoensis (Susabi-nori).